We begin with the raw amino-acid sequence, 209 residues long: Kynurenine formamidase (209 aa).

Residue Trp-20 coordinates substrate. Zn(2+)-binding residues include His-50, His-54, and Asp-56. Residue His-60 is the Proton donor/acceptor of the active site. Positions 161 and 173 each coordinate Zn(2+).

This sequence belongs to the Cyclase 1 superfamily. KynB family. In terms of assembly, homodimer. It depends on Zn(2+) as a cofactor.

The catalysed reaction is N-formyl-L-kynurenine + H2O = L-kynurenine + formate + H(+). It functions in the pathway amino-acid degradation; L-tryptophan degradation via kynurenine pathway; L-kynurenine from L-tryptophan: step 2/2. Functionally, catalyzes the hydrolysis of N-formyl-L-kynurenine to L-kynurenine, the second step in the kynurenine pathway of tryptophan degradation. This chain is Kynurenine formamidase, found in Bacillus thuringiensis subsp. konkukian (strain 97-27).